Reading from the N-terminus, the 303-residue chain is Glycine--tRNA ligase alpha subunit (303 aa).

This sequence belongs to the class-II aminoacyl-tRNA synthetase family. As to quaternary structure, tetramer of two alpha and two beta subunits.

The protein localises to the cytoplasm. The catalysed reaction is tRNA(Gly) + glycine + ATP = glycyl-tRNA(Gly) + AMP + diphosphate. In Escherichia fergusonii (strain ATCC 35469 / DSM 13698 / CCUG 18766 / IAM 14443 / JCM 21226 / LMG 7866 / NBRC 102419 / NCTC 12128 / CDC 0568-73), this protein is Glycine--tRNA ligase alpha subunit.